Reading from the N-terminus, the 512-residue chain is Maturase K (512 aa).

It belongs to the intron maturase 2 family. MatK subfamily.

Its subcellular location is the plastid. It localises to the chloroplast. Functionally, usually encoded in the trnK tRNA gene intron. Probably assists in splicing its own and other chloroplast group II introns. The protein is Maturase K of Alisma canaliculatum (Water plantain).